The chain runs to 275 residues: Lysosome-associated membrane glycoprotein 5 (275 aa).

An N-terminal signal peptide occupies residues 1–18; sequence MEFQLLLLCSVWALGVCA. At 19–228 the chain is on the extracellular side; it reads EQEVENLSGL…VTDQREQLEQ (210 aa). 2 N-linked (GlcNAc...) asparagine glycosylation sites follow: Asn24 and Asn42. Residues 229–249 traverse the membrane as a helical segment; it reads TLPLVLGLILGLIIVITISVY. Residues 250-275 are Cytoplasmic-facing; sequence HFHLKLNAAHTQQPTLPRDRSLYKNM.

The protein belongs to the LAMP family. Glycosylated.

It is found in the cytoplasmic vesicle membrane. The protein localises to the cell membrane. It localises to the cell projection. The protein resides in the dendrite. Its subcellular location is the cytoplasmic vesicle. It is found in the secretory vesicle. The protein localises to the synaptic vesicle membrane. It localises to the growth cone membrane. The protein resides in the early endosome membrane. Its subcellular location is the recycling endosome. It is found in the endoplasmic reticulum-Golgi intermediate compartment membrane. The protein localises to the endosome membrane. Functionally, plays a role in short-term synaptic plasticity in a subset of GABAergic neurons in the brain. This is Lysosome-associated membrane glycoprotein 5 (lamp5) from Danio rerio (Zebrafish).